A 176-amino-acid chain; its full sequence is Large ribosomal subunit protein uL6 (176 aa).

The protein belongs to the universal ribosomal protein uL6 family. In terms of assembly, part of the 50S ribosomal subunit.

In terms of biological role, this protein binds to the 23S rRNA, and is important in its secondary structure. It is located near the subunit interface in the base of the L7/L12 stalk, and near the tRNA binding site of the peptidyltransferase center. The polypeptide is Large ribosomal subunit protein uL6 (Burkholderia ambifaria (strain MC40-6)).